A 171-amino-acid polypeptide reads, in one-letter code: MKNIVLTGFMGTGKTTVGKKVATTLHFNFIDTDKLVEKMAGMSVAEIFEKHGEEYFRKLEKAAVIKASRLKNHVIATGGGVVLNPSNIVQLRKNGVIILLKARPEVILRNISKTKDRPLLAVEDPEKRIRELLEEREPFYRFADYTIDVSDKTIEEVAEEVIRAYIKLKGR.

Residue 11 to 16 (GTGKTT) participates in ATP binding. Threonine 15 contacts Mg(2+). Substrate is bound by residues aspartate 33, arginine 57, and glycine 79. Residue arginine 117 participates in ATP binding. Arginine 136 contributes to the substrate binding site.

This sequence belongs to the shikimate kinase family. Monomer. The cofactor is Mg(2+).

The protein resides in the cytoplasm. The catalysed reaction is shikimate + ATP = 3-phosphoshikimate + ADP + H(+). Its pathway is metabolic intermediate biosynthesis; chorismate biosynthesis; chorismate from D-erythrose 4-phosphate and phosphoenolpyruvate: step 5/7. Catalyzes the specific phosphorylation of the 3-hydroxyl group of shikimic acid using ATP as a cosubstrate. The protein is Shikimate kinase of Caldanaerobacter subterraneus subsp. tengcongensis (strain DSM 15242 / JCM 11007 / NBRC 100824 / MB4) (Thermoanaerobacter tengcongensis).